Reading from the N-terminus, the 2670-residue chain is Inositol 1,4,5-trisphosphate-gated calcium channel ITPR3 (2670 aa).

Over 1–2201 (MNEMSSFLHI…LIYWFSRRMT (2201 aa)) the chain is Cytoplasmic. MIR domains are found at residues 113-173 (GDVV…LRSN), 174-224 (GDNV…INLF), 232-288 (EEVL…VEVV), 295-372 (GGAG…LDPT), and 378-434 (DSFV…IVSV). 1D-myo-inositol 1,4,5-trisphosphate-binding residues include R266, T268, L269, and R270. Residues 321 to 344 (PSYKGDVSDPKAAGPGAQSRTGRR) form a disordered region. Residues R503, K507, R510, Y567, R568, and K569 each contribute to the 1D-myo-inositol 1,4,5-trisphosphate site. R743 contributes to the Ca(2+) binding site. Residues S916 and S934 each carry the phosphoserine modification. 2 residues coordinate Ca(2+): E1122 and E1125. Residues 1134–1153 (VKGEEGEAGASKDKKERPSD) show a composition bias toward basic and acidic residues. Disordered regions lie at residues 1134-1164 (VKGE…HGEK) and 1807-1849 (NMSD…GLHR). Phosphoserine is present on residues S1813, S1832, and S1834. Low complexity predominate over residues 1831–1842 (SSFSMPSSSRYS). Ca(2+) is bound by residues E1881 and E1945. Residues A1995, E2148, and K2151 each coordinate ATP. The chain crosses the membrane as a helical span at residues 2202–2222 (LWGSISFNLAVFINIIIAFFY). The Extracellular portion of the chain corresponds to 2223–2233 (PYVEGASTGVL). The helical transmembrane segment at 2234–2254 (GSPLISLLFWILICFSIAALF) threads the bilayer. Over 2255–2263 (TKHYSVRPL) the chain is Cytoplasmic. A helical transmembrane segment spans residues 2264-2284 (IVALVLRSIYYLGIGPTLNIL). Topologically, residues 2285 to 2324 (GALNLTNKIVFVVSFVGNRGTFIRGYKAMVMDMEFLYHVG) are extracellular. The helical transmembrane segment at 2325–2345 (YILTSVLGLFAHELFYSILLF) threads the bilayer. The Cytoplasmic portion of the chain corresponds to 2346 to 2367 (DLIYREETLFNVIKSVTRNGRS). A helical membrane pass occupies residues 2368–2388 (ILLTALLALILVYLFSIVGFL). At 2389–2495 (FLKDDFILEV…ESLFPARVVY (107 aa)) the chain is on the extracellular side. C2454 and C2460 are oxidised to a cystine. Residues 2496–2516 (DLLFFFIVIIIVLNLIFGVII) form a helical membrane-spanning segment. The Cytoplasmic segment spans residues 2517–2670 (DTFADLRSEK…FVDVQNCMSR (154 aa)). 2 residues coordinate ATP: C2537 and F2538. C2537 serves as a coordination point for Zn(2+). Zn(2+)-binding residues include C2540 and H2557. ATP is bound by residues K2559, H2562, N2563, and M2564. H2562 contacts Zn(2+). T2580 is a binding site for Ca(2+). 2 positions are modified to phosphoserine: S2608 and S2669.

This sequence belongs to the InsP3 receptor family. In terms of assembly, homotetramer. Homodimer. Interacts with TRPC1 and TRPC3. Interacts with TRPC4. Interacts with TRPV4. Interacts with SIGMAR1. Interacts with AKT1 and PML. Interacts with IRAG2 (via coiled-coil domain). Interacts with CABP1. Interacts with TMBIM4/LFG4. Interacts with CEMIP. Interacts with TESPA1. Interacts with TMEM203. Interacts with BOK; regulates ITPR3 expression. Interacts with BCL2L10. Interacts with CHGA and CHGB. Phosphorylated by AKT1 on serine and/or threonine residues.

The protein localises to the endoplasmic reticulum membrane. It localises to the cytoplasmic vesicle. Its subcellular location is the secretory vesicle membrane. The enzyme catalyses Ca(2+)(in) = Ca(2+)(out). Inositol 1,4,5-trisphosphate-gated calcium channel is regulated by cytosolic calcium in a biphasic manner. At low concentrations, cytosolic calcium binds at a high-affinity juxtamembrane domain (JD) calcium binding site, allowing ITPR3 to activate by escaping a low-energy resting state through an ensemble of preactivated states. At high cytosolic calcium concentrations, ITPR3 preferentially enters an inhibited state stabilized by calcium binding at a second, low-affinity cytoplasmic domain (CD) calcium binding site. Its function is as follows. Inositol 1,4,5-trisphosphate-gated calcium channel that, upon 1D-myo-inositol 1,4,5-trisphosphate binding, transports calcium from the endoplasmic reticulum lumen to cytoplasm, thus releasing the intracellular calcium and therefore participates in cellular calcium ion homeostasis. 11D-myo-inositol 1,4,5-trisphosphate binds to the ligand-free channel without altering its global conformation, yielding the low-energy resting state, then progresses through resting-to preactivated transitions to the higher energy preactivated state, which increases affinity for calcium, promoting binding of the low basal cytosolic calcium at the juxtamembrane domain (JD) site, favoring the transition through the ensemble of high-energy intermediate states along the trajectory to the fully-open activated state. Upon opening, releases calcium in the cytosol where it can bind to the low-affinity cytoplasmic domain (CD) site and stabilizes the inhibited state to terminate calcium release. In Rattus norvegicus (Rat), this protein is Inositol 1,4,5-trisphosphate-gated calcium channel ITPR3.